An 82-amino-acid chain; its full sequence is Precursor of CEP3 (82 aa).

Positions 1–24 (MATINVYVFAFIFLLTISVGSIEG) are cleaved as a signal peptide. The propeptide occupies 25-63 (RKLTKFTVTTSEEIRAGGSVLSSSPPTEPLESPPSHGVD). Residues 40–82 (AGGSVLSSSPPTEPLESPPSHGVDTFRPTEPGHSPGIGHSVHN) are disordered. Hydroxyproline is present on residues P67, P70, and P74. Residues 79 to 82 (SVHN) constitute a propeptide that is removed on maturation.

It belongs to the C-terminally encoded plant signaling peptide (CEP) family. As to quaternary structure, interacts with the CEP receptor CEPR1. In terms of processing, the mature small signaling peptide is generated by proteolytic processing of the longer precursor. In terms of tissue distribution, mostly expressed in roots. Present in lateral roots (especially in vasculature), root-hypocotyl junction and cotyledons.

The protein resides in the secreted. Its subcellular location is the extracellular space. It localises to the apoplast. In terms of biological role, extracellular signaling peptide that represses primary root growth rate and significantly inhibits lateral root formation. Promotes shoot growth. Modulates leaf morphology. Regulates systemic nitrogen (N)-demand signaling. Mediates systemic up-regulation of genes involved in N uptake and assimilation pathways. In Arabidopsis thaliana (Mouse-ear cress), this protein is Precursor of CEP3.